Consider the following 1167-residue polypeptide: Kinesin-like protein KIN-14M (1167 aa).

The tract at residues 93–130 is disordered; it reads PRKENDPGTQNSEGRRKIPKNPAMSEPSSPLSQTTLSS. The span at 117 to 130 shows a compositional bias: low complexity; sequence SEPSSPLSQTTLSS. Coiled-coil stretches lie at residues 271–333, 366–398, and 432–489; these read VHQM…KEEM, AKYR…AMKS, and KQEL…ESRS. Positions 572-900 constitute a Kinesin motor domain; it reads NIRVHCRIRP…LKFADRVSGV (329 aa). 656–663 is an ATP binding site; it reads GQTGSGKT. A coiled-coil region spans residues 907 to 944; it reads ANKEGKDIKEFKEQLSLLKDKIAKKDEEISRLQLQSHN. Disordered stretches follow at residues 955–974 and 1083–1167; these read SLLK…SKIQ and PDQD…KRWT. A compositionally biased stretch (low complexity) spans 958–972; the sequence is KHSSSSPGISSLGSK. Polar residues-rich tracts occupy residues 1113 to 1124 and 1151 to 1167; these read ASRTTTPKTPQS and TQAT…KRWT.

It belongs to the TRAFAC class myosin-kinesin ATPase superfamily. Kinesin family. KIN-14 subfamily.

The polypeptide is Kinesin-like protein KIN-14M (Oryza sativa subsp. japonica (Rice)).